Consider the following 599-residue polypeptide: Elongation factor 4 (599 aa).

Residues 2 to 185 (ENIRNFSIIA…AITKRIPPPK (184 aa)) enclose the tr-type G domain. GTP-binding positions include 14 to 19 (DHGKST) and 132 to 135 (NKID).

Belongs to the TRAFAC class translation factor GTPase superfamily. Classic translation factor GTPase family. LepA subfamily.

Its subcellular location is the cell inner membrane. It carries out the reaction GTP + H2O = GDP + phosphate + H(+). In terms of biological role, required for accurate and efficient protein synthesis under certain stress conditions. May act as a fidelity factor of the translation reaction, by catalyzing a one-codon backward translocation of tRNAs on improperly translocated ribosomes. Back-translocation proceeds from a post-translocation (POST) complex to a pre-translocation (PRE) complex, thus giving elongation factor G a second chance to translocate the tRNAs correctly. Binds to ribosomes in a GTP-dependent manner. The chain is Elongation factor 4 from Hydrogenobaculum sp. (strain Y04AAS1).